Consider the following 176-residue polypeptide: Ribosome maturation factor RimP (176 aa).

This sequence belongs to the RimP family.

Its subcellular location is the cytoplasm. Required for maturation of 30S ribosomal subunits. The protein is Ribosome maturation factor RimP of Mycolicibacterium vanbaalenii (strain DSM 7251 / JCM 13017 / BCRC 16820 / KCTC 9966 / NRRL B-24157 / PYR-1) (Mycobacterium vanbaalenii).